Consider the following 477-residue polypeptide: Glutamate--tRNA ligase (477 aa).

Positions Pro8 to Thr18 match the 'HIGH' region motif. The short motif at Lys247–Arg251 is the 'KMSKS' region element. An ATP-binding site is contributed by Lys250.

This sequence belongs to the class-I aminoacyl-tRNA synthetase family. Glutamate--tRNA ligase type 1 subfamily. In terms of assembly, monomer.

It localises to the cytoplasm. The catalysed reaction is tRNA(Glu) + L-glutamate + ATP = L-glutamyl-tRNA(Glu) + AMP + diphosphate. Catalyzes the attachment of glutamate to tRNA(Glu) in a two-step reaction: glutamate is first activated by ATP to form Glu-AMP and then transferred to the acceptor end of tRNA(Glu). In Synechococcus sp. (strain CC9605), this protein is Glutamate--tRNA ligase.